The primary structure comprises 179 residues: Interleukin-10 (179 aa).

Residues 1–19 (MPSSSALLCCLVFLAGVAA) form the signal peptide. 2 disulfide bridges follow: C31/C127 and C81/C133. N135 is a glycosylation site (N-linked (GlcNAc...) asparagine).

Belongs to the IL-10 family. In terms of assembly, homodimer. Interacts with IL10RA and IL10RB.

The protein resides in the secreted. Functionally, major immune regulatory cytokine that acts on many cells of the immune system where it has profound anti-inflammatory functions, limiting excessive tissue disruption caused by inflammation. Mechanistically, IL10 binds to its heterotetrameric receptor comprising IL10RA and IL10RB leading to JAK1 and STAT2-mediated phosphorylation of STAT3. In turn, STAT3 translocates to the nucleus where it drives expression of anti-inflammatory mediators. Targets antigen-presenting cells (APCs) such as macrophages and monocytes and inhibits their release of pro-inflammatory cytokines including granulocyte-macrophage colony-stimulating factor /GM-CSF, granulocyte colony-stimulating factor/G-CSF, IL-1 alpha, IL-1 beta, IL-6, IL-8 and TNF-alpha. Also interferes with antigen presentation by reducing the expression of MHC-class II and co-stimulatory molecules, thereby inhibiting their ability to induce T cell activation. In addition, controls the inflammatory response of macrophages by reprogramming essential metabolic pathways including mTOR signaling. This Cervus elaphus (Red deer) protein is Interleukin-10 (IL10).